The sequence spans 103 residues: Urease subunit beta (103 aa).

This sequence belongs to the urease beta subunit family. As to quaternary structure, heterotrimer of UreA (gamma), UreB (beta) and UreC (alpha) subunits. Three heterotrimers associate to form the active enzyme.

The protein resides in the cytoplasm. It carries out the reaction urea + 2 H2O + H(+) = hydrogencarbonate + 2 NH4(+). It participates in nitrogen metabolism; urea degradation; CO(2) and NH(3) from urea (urease route): step 1/1. This Blochmanniella floridana protein is Urease subunit beta.